The following is a 159-amino-acid chain: MQLVIVAVGHKMPGWIETGFNEYAKRMPPELRIELREVKPETRSSSNNAATVMQREAARIDAVLGSLSRQCRIVALDERGRDFTTVQLAGQLTDWQREGGDVAFLIGGADGLDPALKARAQTLLRLSSLTLPHGMVRVLLAEQLYRAWSVTQNHPYHRA.

Residues Leu-76, Gly-107, and Leu-126–Leu-131 contribute to the S-adenosyl-L-methionine site.

Belongs to the RNA methyltransferase RlmH family. In terms of assembly, homodimer.

It localises to the cytoplasm. The enzyme catalyses pseudouridine(1915) in 23S rRNA + S-adenosyl-L-methionine = N(3)-methylpseudouridine(1915) in 23S rRNA + S-adenosyl-L-homocysteine + H(+). Specifically methylates the pseudouridine at position 1915 (m3Psi1915) in 23S rRNA. This Cupriavidus pinatubonensis (strain JMP 134 / LMG 1197) (Cupriavidus necator (strain JMP 134)) protein is Ribosomal RNA large subunit methyltransferase H.